The following is a 224-amino-acid chain: PKHD-type hydroxylase Shewmr7_0698 (224 aa).

The Fe2OG dioxygenase domain occupies 78-176 (QFYPPLFNRY…RTAAFMWLQS (99 aa)). Positions 96, 98, and 157 each coordinate Fe cation. A 2-oxoglutarate-binding site is contributed by Arg-167.

Requires Fe(2+) as cofactor. L-ascorbate serves as cofactor.

This is PKHD-type hydroxylase Shewmr7_0698 from Shewanella sp. (strain MR-7).